The primary structure comprises 1216 residues: ATP-dependent DNA helicase Q4 (1216 aa).

Disordered stretches follow at residues 72–100 (EAQE…QSLL) and 113–171 (NLKN…PRLG). Polar residues-rich tracts occupy residues 86–100 (AATQ…QSLL) and 114–137 (LKNT…SLST). Ser179 and Ser181 each carry phosphoserine. Positions 235–340 (SEVSVQSPEA…LHASPRPASL (106 aa)) are disordered. Composition is skewed to polar residues over residues 248–262 (QPAQ…SINS) and 306–320 (TQVN…SNQA). The CCHC-type zinc finger occupies 393–410 (DTCFRCGQFGHWASQCSQ). Residues 436–458 (AQRTGTASCHHSGEETQPAAPEL) are disordered. Residues 506–684 (IMRILSGIST…AQHLGIAGEF (179 aa)) form the Helicase ATP-binding domain. An ATP-binding site is contributed by 519-526 (LPTGAGKS). The DEAH box signature appears at 627–630 (DEVH). Residues 705-872 (DSDQALVTLL…AVKRLVQRVF (168 aa)) enclose the Helicase C-terminal domain. The Zn(2+) site is built by Cys875, Cys877, Cys906, and His909.

It belongs to the helicase family. RecQ subfamily. As to quaternary structure, interacts with UBR1 and UBR2. Interacts with MCM10; this interaction regulates RECQL4 unwinding activity. Interacts with TOPBP1. Zn(2+) serves as cofactor.

It localises to the cytoplasm. Its subcellular location is the nucleus. The catalysed reaction is Couples ATP hydrolysis with the unwinding of duplex DNA by translocating in the 3'-5' direction.. It carries out the reaction ATP + H2O = ADP + phosphate + H(+). In terms of biological role, an ATP-dependent DNA helicase which unwinds dsDNA with a 3'-overhang in a 3'-5' direction. May play a role in development of the palate and the limbs. May modulate chromosome segregation. This chain is ATP-dependent DNA helicase Q4 (Recql4), found in Mus musculus (Mouse).